The following is a 432-amino-acid chain: Histidine--tRNA ligase (432 aa).

Positions 412–432 (TQVPLAAFPPEEGRPTYDDYA) are disordered. The segment covering 422–432 (EEGRPTYDDYA) has biased composition (basic and acidic residues).

It belongs to the class-II aminoacyl-tRNA synthetase family.

The protein resides in the cytoplasm. The enzyme catalyses tRNA(His) + L-histidine + ATP = L-histidyl-tRNA(His) + AMP + diphosphate + H(+). The chain is Histidine--tRNA ligase from Natronomonas pharaonis (strain ATCC 35678 / DSM 2160 / CIP 103997 / JCM 8858 / NBRC 14720 / NCIMB 2260 / Gabara) (Halobacterium pharaonis).